The sequence spans 568 residues: Urease subunit alpha (568 aa).

A Urease domain is found at 131–568; the sequence is GGMDAHIHFI…LPLAQRYFLY (438 aa). Ni(2+) is bound by residues H136, H138, and K219. The residue at position 219 (K219) is an N6-carboxylysine. Residue H221 participates in substrate binding. Ni(2+) is bound by residues H248 and H274. Catalysis depends on H322, which acts as the Proton donor. D362 provides a ligand contact to Ni(2+).

This sequence belongs to the metallo-dependent hydrolases superfamily. Urease alpha subunit family. As to quaternary structure, heterotrimer of UreA (gamma), UreB (beta) and UreC (alpha) subunits. Three heterotrimers associate to form the active enzyme. The cofactor is Ni cation. Post-translationally, carboxylation allows a single lysine to coordinate two nickel ions.

The protein localises to the cytoplasm. The catalysed reaction is urea + 2 H2O + H(+) = hydrogencarbonate + 2 NH4(+). It functions in the pathway nitrogen metabolism; urea degradation; CO(2) and NH(3) from urea (urease route): step 1/1. The chain is Urease subunit alpha from Cereibacter sphaeroides (strain ATCC 17023 / DSM 158 / JCM 6121 / CCUG 31486 / LMG 2827 / NBRC 12203 / NCIMB 8253 / ATH 2.4.1.) (Rhodobacter sphaeroides).